The chain runs to 330 residues: Virulence plasmid integrase pGP8-D (330 aa).

The region spanning 39–124 (FSLFEVIMHW…SYISLTRFLN (86 aa)) is the Core-binding (CB) domain. The Tyr recombinase domain occupies 152-327 (VKTNAMNRLQ…SREDNASKKM (176 aa)). Catalysis depends on residues Arg-189, Lys-214, His-279, Arg-282, and His-305. Tyr-314 serves as the catalytic O-(3'-phospho-DNA)-tyrosine intermediate.

It belongs to the 'phage' integrase family.

This Chlamydia muridarum (strain MoPn / Nigg) protein is Virulence plasmid integrase pGP8-D.